The primary structure comprises 280 residues: Proteasome subunit beta (280 aa).

The propeptide at 1–53 is removed in mature form; by autocatalysis; that stretch reads MSEYSAGRSGFSPAYLDRVGSSFTDFLAAAAPHLLPGSRPVPQIPVGNVTPHG. The Nucleophile role is filled by T54.

Belongs to the peptidase T1B family. As to quaternary structure, the 20S proteasome core is composed of 14 alpha and 14 beta subunits that assemble into four stacked heptameric rings, resulting in a barrel-shaped structure. The two inner rings, each composed of seven catalytic beta subunits, are sandwiched by two outer rings, each composed of seven alpha subunits. The catalytic chamber with the active sites is on the inside of the barrel. Has a gated structure, the ends of the cylinder being occluded by the N-termini of the alpha-subunits. Is capped by the proteasome-associated ATPase, ARC.

It is found in the cytoplasm. It carries out the reaction Cleavage of peptide bonds with very broad specificity.. It functions in the pathway protein degradation; proteasomal Pup-dependent pathway. Its activity is regulated as follows. The formation of the proteasomal ATPase ARC-20S proteasome complex, likely via the docking of the C-termini of ARC into the intersubunit pockets in the alpha-rings, may trigger opening of the gate for substrate entry. Interconversion between the open-gate and close-gate conformations leads to a dynamic regulation of the 20S proteasome proteolysis activity. Functionally, component of the proteasome core, a large protease complex with broad specificity involved in protein degradation. The sequence is that of Proteasome subunit beta from Geodermatophilus obscurus (strain ATCC 25078 / DSM 43160 / JCM 3152 / CCUG 61914 / KCC A-0152 / KCTC 9177 / NBRC 13315 / NRRL B-3577 / G-20).